Here is a 468-residue protein sequence, read N- to C-terminus: UDP-N-acetylmuramate--L-alanine ligase (468 aa).

An ATP-binding site is contributed by 117 to 123; it reads GTHGKTT.

Belongs to the MurCDEF family.

Its subcellular location is the cytoplasm. The catalysed reaction is UDP-N-acetyl-alpha-D-muramate + L-alanine + ATP = UDP-N-acetyl-alpha-D-muramoyl-L-alanine + ADP + phosphate + H(+). The protein operates within cell wall biogenesis; peptidoglycan biosynthesis. Cell wall formation. The sequence is that of UDP-N-acetylmuramate--L-alanine ligase from Maricaulis maris (strain MCS10) (Caulobacter maris).